The chain runs to 244 residues: Putative quercetin 2,3-dioxygenase Mb0187c (244 aa).

His-60, His-62, His-104, and Glu-106 together coordinate a divalent metal cation.

It belongs to the pirin family. Requires a divalent metal cation as cofactor.

The enzyme catalyses quercetin + O2 = 2-(3,4-dihydroxybenzoyloxy)-4,6-dihydroxybenzoate + CO. Its pathway is flavonoid metabolism; quercetin degradation. Its function is as follows. Putative quercetin 2,3-dioxygenase. This Mycobacterium bovis (strain ATCC BAA-935 / AF2122/97) protein is Putative quercetin 2,3-dioxygenase Mb0187c.